The chain runs to 443 residues: tRNA(Ile2) 2-agmatinylcytidine synthetase TiaS (443 aa).

Belongs to the TiaS family.

It is found in the cytoplasm. It catalyses the reaction cytidine(34) in tRNA(Ile2) + agmatine + ATP + H2O = 2-agmatinylcytidine(34) in tRNA(Ile2) + AMP + 2 phosphate + 2 H(+). Functionally, ATP-dependent agmatine transferase that catalyzes the formation of 2-agmatinylcytidine (agm2C) at the wobble position (C34) of tRNA(Ile2), converting the codon specificity from AUG to AUA. The chain is tRNA(Ile2) 2-agmatinylcytidine synthetase TiaS from Saccharolobus islandicus (strain L.S.2.15 / Lassen #1) (Sulfolobus islandicus).